The sequence spans 359 residues: UPF0283 membrane protein Rleg2_1967 (359 aa).

Positions 1–43 (MSKPPSDPPRRPPAAFTYEDEATERHDNGRQAERRRKPESFSE) are disordered. Residues 23-40 (TERHDNGRQAERRRKPES) show a composition bias toward basic and acidic residues. 2 consecutive transmembrane segments (helical) span residues 77-97 (FGKI…GLWT) and 111-131 (LGYL…ALVI).

Belongs to the UPF0283 family.

Its subcellular location is the cell inner membrane. This Rhizobium leguminosarum bv. trifolii (strain WSM2304) protein is UPF0283 membrane protein Rleg2_1967.